We begin with the raw amino-acid sequence, 204 residues long: uncharacterized protein (204 aa).

The next 6 membrane-spanning stretches (helical) occupy residues 19–39 (TANP…LLNL), 42–62 (AGLF…GGIA), 78–98 (GTVA…LLVI), 116–136 (PVAM…MFIA), 143–163 (GIQV…AGEI), and 167–187 (ALIT…AMYV).

This sequence belongs to the acetate uptake transporter (AceTr) (TC 2.A.96) family.

It is found in the cell membrane. This is an uncharacterized protein from Methanothermobacter thermautotrophicus (strain ATCC 29096 / DSM 1053 / JCM 10044 / NBRC 100330 / Delta H) (Methanobacterium thermoautotrophicum).